We begin with the raw amino-acid sequence, 101 residues long: NADH-quinone oxidoreductase subunit K (101 aa).

3 helical membrane-spanning segments follow: residues 4 to 24, 30 to 50, and 62 to 82; these read LGHL…GIFL, IVLL…FIAF, and FVFF…AILV.

The protein belongs to the complex I subunit 4L family. As to quaternary structure, NDH-1 is composed of 14 different subunits. Subunits NuoA, H, J, K, L, M, N constitute the membrane sector of the complex.

It localises to the cell inner membrane. It carries out the reaction a quinone + NADH + 5 H(+)(in) = a quinol + NAD(+) + 4 H(+)(out). NDH-1 shuttles electrons from NADH, via FMN and iron-sulfur (Fe-S) centers, to quinones in the respiratory chain. The immediate electron acceptor for the enzyme in this species is believed to be ubiquinone. Couples the redox reaction to proton translocation (for every two electrons transferred, four hydrogen ions are translocated across the cytoplasmic membrane), and thus conserves the redox energy in a proton gradient. The protein is NADH-quinone oxidoreductase subunit K of Xanthomonas axonopodis pv. citri (strain 306).